Here is a 113-residue protein sequence, read N- to C-terminus: U10-theraphotoxin-Hs2a (113 aa).

Positions 1–21 are cleaved as a signal peptide; sequence MNTVRVTFLLVFVLAVSLGQA. A propeptide spanning residues 22–67 is cleaved from the precursor; it reads DEDGNRMEKRQKKTEAENLLLPKLEELDAKLWEEDSVESRNSRQKR. 3 cysteine pairs are disulfide-bonded: Cys68-Cys86, Cys75-Cys91, and Cys85-Cys106.

It belongs to the neurotoxin 14 (magi-1) family. 02 (HWTX-XVIc) subfamily. Expressed by the venom gland.

It localises to the secreted. In terms of biological role, probable ion channel inhibitor. The sequence is that of U10-theraphotoxin-Hs2a from Cyriopagopus schmidti (Chinese bird spider).